The primary structure comprises 145 residues: NADH dehydrogenase [ubiquinone] 1 alpha subcomplex subunit 12 (145 aa).

M1 carries the post-translational modification N-acetylmethionine.

The protein belongs to the complex I NDUFA12 subunit family. In terms of assembly, complex I is composed of 45 different subunits.

The protein resides in the mitochondrion inner membrane. Its function is as follows. Accessory subunit of the mitochondrial membrane respiratory chain NADH dehydrogenase (Complex I), that is believed not to be involved in catalysis. Complex I functions in the transfer of electrons from NADH to the respiratory chain. The immediate electron acceptor for the enzyme is believed to be ubiquinone. The polypeptide is NADH dehydrogenase [ubiquinone] 1 alpha subcomplex subunit 12 (Ndufa12) (Mus musculus (Mouse)).